Reading from the N-terminus, the 69-residue chain is Large ribosomal subunit protein bL31 (69 aa).

Zn(2+) is bound by residues cysteine 16, cysteine 18, cysteine 37, and cysteine 40.

The protein belongs to the bacterial ribosomal protein bL31 family. Type A subfamily. Part of the 50S ribosomal subunit. Requires Zn(2+) as cofactor.

Binds the 23S rRNA. The polypeptide is Large ribosomal subunit protein bL31 (Syntrophotalea carbinolica (strain DSM 2380 / NBRC 103641 / GraBd1) (Pelobacter carbinolicus)).